The following is a 131-amino-acid chain: Mediator of RNA polymerase II transcription subunit 31 (131 aa).

Ala-2 carries the post-translational modification N-acetylalanine.

This sequence belongs to the Mediator complex subunit 31 family. In terms of assembly, component of the Mediator complex, which is composed of MED1, MED4, MED6, MED7, MED8, MED9, MED10, MED11, MED12, MED13, MED13L, MED14, MED15, MED16, MED17, MED18, MED19, MED20, MED21, MED22, MED23, MED24, MED25, MED26, MED27, MED29, MED30, MED31, CCNC, CDK8 and CDC2L6/CDK11. The MED12, MED13, CCNC and CDK8 subunits form a distinct module termed the CDK8 module. Mediator containing the CDK8 module is less active than Mediator lacking this module in supporting transcriptional activation. Individual preparations of the Mediator complex lacking one or more distinct subunits have been variously termed ARC, CRSP, DRIP, PC2, SMCC and TRAP.

Its subcellular location is the nucleus. Its function is as follows. Component of the Mediator complex, a coactivator involved in the regulated transcription of nearly all RNA polymerase II-dependent genes. Mediator functions as a bridge to convey information from gene-specific regulatory proteins to the basal RNA polymerase II transcription machinery. Mediator is recruited to promoters by direct interactions with regulatory proteins and serves as a scaffold for the assembly of a functional preinitiation complex with RNA polymerase II and the general transcription factors. In Homo sapiens (Human), this protein is Mediator of RNA polymerase II transcription subunit 31 (MED31).